We begin with the raw amino-acid sequence, 263 residues long: 4-hydroxy-tetrahydrodipicolinate reductase (263 aa).

Residues 7–12 (GASGRM) and Asp33 each bind NAD(+). Arg34 is an NADP(+) binding site. NAD(+) contacts are provided by residues 96 to 98 (GTT) and 120 to 123 (APNM). His153 (proton donor/acceptor) is an active-site residue. Residue His154 participates in (S)-2,3,4,5-tetrahydrodipicolinate binding. The active-site Proton donor is the Lys157. Residue 163 to 164 (GT) coordinates (S)-2,3,4,5-tetrahydrodipicolinate.

This sequence belongs to the DapB family.

The protein resides in the cytoplasm. The catalysed reaction is (S)-2,3,4,5-tetrahydrodipicolinate + NAD(+) + H2O = (2S,4S)-4-hydroxy-2,3,4,5-tetrahydrodipicolinate + NADH + H(+). It catalyses the reaction (S)-2,3,4,5-tetrahydrodipicolinate + NADP(+) + H2O = (2S,4S)-4-hydroxy-2,3,4,5-tetrahydrodipicolinate + NADPH + H(+). It functions in the pathway amino-acid biosynthesis; L-lysine biosynthesis via DAP pathway; (S)-tetrahydrodipicolinate from L-aspartate: step 4/4. In terms of biological role, catalyzes the conversion of 4-hydroxy-tetrahydrodipicolinate (HTPA) to tetrahydrodipicolinate. The protein is 4-hydroxy-tetrahydrodipicolinate reductase of Ralstonia pickettii (strain 12J).